Reading from the N-terminus, the 248-residue chain is Methyl-coenzyme M reductase subunit gamma (248 aa).

Arginine 121 lines the coenzyme M pocket.

The protein belongs to the methyl-coenzyme M reductase gamma subunit family. MCR is a hexamer of two alpha, two beta, and two gamma chains, forming a dimer of heterotrimers. It depends on coenzyme F430 as a cofactor.

Its subcellular location is the cytoplasm. The catalysed reaction is coenzyme B + methyl-coenzyme M = methane + coenzyme M-coenzyme B heterodisulfide. It functions in the pathway one-carbon metabolism; methyl-coenzyme M reduction; methane from methyl-coenzyme M: step 1/1. In terms of biological role, component of the methyl-coenzyme M reductase (MCR) I that catalyzes the reductive cleavage of methyl-coenzyme M (CoM-S-CH3 or 2-(methylthio)ethanesulfonate) using coenzyme B (CoB or 7-mercaptoheptanoylthreonine phosphate) as reductant which results in the production of methane and the mixed heterodisulfide of CoB and CoM (CoM-S-S-CoB). This is the final step in methanogenesis. This chain is Methyl-coenzyme M reductase subunit gamma (mcrG), found in Methanosarcina barkeri (strain Fusaro / DSM 804).